The chain runs to 352 residues: Thymidine kinase (352 aa).

26-33 (GSMGIGKT) provides a ligand contact to ATP. Glutamate 54 functions as the Proton acceptor in the catalytic mechanism. Glutamine 95 serves as a coordination point for substrate. Arginine 185 contributes to the ATP binding site. Arginine 191 provides a ligand contact to substrate.

The protein belongs to the herpesviridae thymidine kinase family. Homodimer.

It catalyses the reaction thymidine + ATP = dTMP + ADP + H(+). Catalyzes the transfer of the gamma-phospho group of ATP to thymidine to generate dTMP in the salvage pathway of pyrimidine synthesis. The dTMP serves as a substrate for DNA polymerase during viral DNA replication. Allows the virus to be reactivated and to grow in non-proliferative cells lacking a high concentration of phosphorylated nucleic acid precursors. This is Thymidine kinase from Gallus gallus (Chicken).